A 255-amino-acid polypeptide reads, in one-letter code: 3-dehydroquinate dehydratase (255 aa).

3-dehydroquinate contacts are provided by residues 47-49 (EWR) and Arg83. The active-site Proton donor/acceptor is the His144. Lys171 serves as the catalytic Schiff-base intermediate with substrate. Residues Arg214, Ser233, and Gln237 each contribute to the 3-dehydroquinate site.

The protein belongs to the type-I 3-dehydroquinase family. As to quaternary structure, homodimer or homotetramer.

The catalysed reaction is 3-dehydroquinate = 3-dehydroshikimate + H2O. Its pathway is metabolic intermediate biosynthesis; chorismate biosynthesis; chorismate from D-erythrose 4-phosphate and phosphoenolpyruvate: step 3/7. Involved in the third step of the chorismate pathway, which leads to the biosynthesis of aromatic amino acids. Catalyzes the cis-dehydration of 3-dehydroquinate (DHQ) and introduces the first double bond of the aromatic ring to yield 3-dehydroshikimate. The reaction involves the formation of an imine intermediate between the keto group of 3-dehydroquinate and the epsilon-amino group of Lys-170 at the active site. The protein is 3-dehydroquinate dehydratase of Clostridioides difficile (strain 630) (Peptoclostridium difficile).